The sequence spans 231 residues: Biosynthetic peptidoglycan transglycosylase (231 aa).

The chain crosses the membrane as a helical span at residues 12–34 (AAVLAGLALLLVALAVSYRWVPP).

The protein belongs to the glycosyltransferase 51 family.

The protein resides in the cell inner membrane. It carries out the reaction [GlcNAc-(1-&gt;4)-Mur2Ac(oyl-L-Ala-gamma-D-Glu-L-Lys-D-Ala-D-Ala)](n)-di-trans,octa-cis-undecaprenyl diphosphate + beta-D-GlcNAc-(1-&gt;4)-Mur2Ac(oyl-L-Ala-gamma-D-Glu-L-Lys-D-Ala-D-Ala)-di-trans,octa-cis-undecaprenyl diphosphate = [GlcNAc-(1-&gt;4)-Mur2Ac(oyl-L-Ala-gamma-D-Glu-L-Lys-D-Ala-D-Ala)](n+1)-di-trans,octa-cis-undecaprenyl diphosphate + di-trans,octa-cis-undecaprenyl diphosphate + H(+). It functions in the pathway cell wall biogenesis; peptidoglycan biosynthesis. Its function is as follows. Peptidoglycan polymerase that catalyzes glycan chain elongation from lipid-linked precursors. The protein is Biosynthetic peptidoglycan transglycosylase of Rhodospirillum centenum (strain ATCC 51521 / SW).